A 495-amino-acid chain; its full sequence is UDP-N-acetylmuramate--L-alanine ligase (495 aa).

An ATP-binding site is contributed by 122 to 128; the sequence is GTHGKTT.

Belongs to the MurCDEF family.

The protein resides in the cytoplasm. It carries out the reaction UDP-N-acetyl-alpha-D-muramate + L-alanine + ATP = UDP-N-acetyl-alpha-D-muramoyl-L-alanine + ADP + phosphate + H(+). Its pathway is cell wall biogenesis; peptidoglycan biosynthesis. Its function is as follows. Cell wall formation. In Mycobacterium leprae (strain TN), this protein is UDP-N-acetylmuramate--L-alanine ligase.